A 74-amino-acid polypeptide reads, in one-letter code: Coleoptericin (74 aa).

Positions 1-74 (SLQGGAPNFP…TWHVGGTYRR (74 aa)) are disordered.

This sequence belongs to the coleoptericin family.

Its subcellular location is the secreted. Its function is as follows. Responsible for the anti Gram-negative activity of immune hemolymph of Z.atratus. This chain is Coleoptericin, found in Zophobas atratus (Giant mealworm beetle).